The following is a 215-amino-acid chain: N-(5'-phosphoribosyl)anthranilate isomerase (215 aa).

The protein belongs to the TrpF family.

It catalyses the reaction N-(5-phospho-beta-D-ribosyl)anthranilate = 1-(2-carboxyphenylamino)-1-deoxy-D-ribulose 5-phosphate. It functions in the pathway amino-acid biosynthesis; L-tryptophan biosynthesis; L-tryptophan from chorismate: step 3/5. The sequence is that of N-(5'-phosphoribosyl)anthranilate isomerase from Ruegeria sp. (strain TM1040) (Silicibacter sp.).